A 237-amino-acid chain; its full sequence is Ribonuclease PH (237 aa).

Residues Arg-86 and 124 to 126 each bind phosphate; that span reads GTR.

The protein belongs to the RNase PH family. In terms of assembly, homohexameric ring arranged as a trimer of dimers.

It carries out the reaction tRNA(n+1) + phosphate = tRNA(n) + a ribonucleoside 5'-diphosphate. Phosphorolytic 3'-5' exoribonuclease that plays an important role in tRNA 3'-end maturation. Removes nucleotide residues following the 3'-CCA terminus of tRNAs; can also add nucleotides to the ends of RNA molecules by using nucleoside diphosphates as substrates, but this may not be physiologically important. Probably plays a role in initiation of 16S rRNA degradation (leading to ribosome degradation) during starvation. The sequence is that of Ribonuclease PH from Methylobacterium nodulans (strain LMG 21967 / CNCM I-2342 / ORS 2060).